The primary structure comprises 189 residues: Peptidyl-tRNA hydrolase (189 aa).

A tRNA-binding site is contributed by Tyr-14. The active-site Proton acceptor is the His-19. Residues Phe-61, Asn-63, and Asn-109 each coordinate tRNA.

This sequence belongs to the PTH family. In terms of assembly, monomer.

Its subcellular location is the cytoplasm. It carries out the reaction an N-acyl-L-alpha-aminoacyl-tRNA + H2O = an N-acyl-L-amino acid + a tRNA + H(+). In terms of biological role, hydrolyzes ribosome-free peptidyl-tRNAs (with 1 or more amino acids incorporated), which drop off the ribosome during protein synthesis, or as a result of ribosome stalling. Its function is as follows. Catalyzes the release of premature peptidyl moieties from peptidyl-tRNA molecules trapped in stalled 50S ribosomal subunits, and thus maintains levels of free tRNAs and 50S ribosomes. This chain is Peptidyl-tRNA hydrolase, found in Sulfurovum sp. (strain NBC37-1).